We begin with the raw amino-acid sequence, 363 residues long: Actin-related protein 7 (363 aa).

Met-1 is subject to N-acetylmethionine.

The protein belongs to the actin family. Plant ARP7 subfamily. In terms of tissue distribution, mostly expressed in flowers, and, to a lower extent, in roots, seedlings, leaves and siliques (at protein level).

It is found in the nucleus. The protein localises to the cytoplasm. Functionally, essential protein required during embryogenesis and all plant development stages, probably through a chromatin-mediated regulation of gene expression. The chain is Actin-related protein 7 (ARP7) from Arabidopsis thaliana (Mouse-ear cress).